A 33-amino-acid chain; its full sequence is ATP synthase 27 kDa subunit, mitochondrial (33 aa).

It is found in the mitochondrion. Its subcellular location is the mitochondrion inner membrane. Its function is as follows. Mitochondrial membrane ATP synthase (F(1)F(0) ATP synthase or Complex V) produces ATP from ADP in the presence of a proton gradient across the membrane which is generated by electron transport complexes of the respiratory chain. F-type ATPases consist of two structural domains, F(1) - containing the extramembraneous catalytic core and F(0) - containing the membrane proton channel, linked together by a central stalk and a peripheral stalk. During catalysis, ATP synthesis in the catalytic domain of F(1) is coupled via a rotary mechanism of the central stalk subunits to proton translocation. Part of the complex F(0) domain. In Solanum tuberosum (Potato), this protein is ATP synthase 27 kDa subunit, mitochondrial.